A 326-amino-acid polypeptide reads, in one-letter code: Lipoyl synthase (326 aa).

Positions 56, 61, 67, 82, 86, 89, and 298 each coordinate [4Fe-4S] cluster. The 220-residue stretch at 68–287 folds into the Radical SAM core domain; sequence WEDREATFLI…KDEADAIGYS (220 aa).

Belongs to the radical SAM superfamily. Lipoyl synthase family. [4Fe-4S] cluster is required as a cofactor.

Its subcellular location is the cytoplasm. The catalysed reaction is [[Fe-S] cluster scaffold protein carrying a second [4Fe-4S](2+) cluster] + N(6)-octanoyl-L-lysyl-[protein] + 2 oxidized [2Fe-2S]-[ferredoxin] + 2 S-adenosyl-L-methionine + 4 H(+) = [[Fe-S] cluster scaffold protein] + N(6)-[(R)-dihydrolipoyl]-L-lysyl-[protein] + 4 Fe(3+) + 2 hydrogen sulfide + 2 5'-deoxyadenosine + 2 L-methionine + 2 reduced [2Fe-2S]-[ferredoxin]. It functions in the pathway protein modification; protein lipoylation via endogenous pathway; protein N(6)-(lipoyl)lysine from octanoyl-[acyl-carrier-protein]: step 2/2. Its function is as follows. Catalyzes the radical-mediated insertion of two sulfur atoms into the C-6 and C-8 positions of the octanoyl moiety bound to the lipoyl domains of lipoate-dependent enzymes, thereby converting the octanoylated domains into lipoylated derivatives. The chain is Lipoyl synthase from Streptomyces griseus subsp. griseus (strain JCM 4626 / CBS 651.72 / NBRC 13350 / KCC S-0626 / ISP 5235).